The primary structure comprises 143 residues: Fluoride-specific ion channel FluC (143 aa).

4 helical membrane-spanning segments follow: residues 3-23 (AVVWWQSLLLVMLGGAFGSGL), 41-61 (WGTLAVNLIGSFVAGFLLIWL), 76-96 (IVGLIGGLTTFSSLMMECLVF), and 103-123 (LMVGLYLCITLLFGLLFVFLG). Na(+) contacts are provided by G81 and T84.

Belongs to the fluoride channel Fluc/FEX (TC 1.A.43) family.

It is found in the cell inner membrane. The catalysed reaction is fluoride(in) = fluoride(out). Its activity is regulated as follows. Na(+) is not transported, but it plays an essential structural role and its presence is essential for fluoride channel function. Fluoride-specific ion channel. Important for reducing fluoride concentration in the cell, thus reducing its toxicity. This is Fluoride-specific ion channel FluC from Xylella fastidiosa (strain 9a5c).